Reading from the N-terminus, the 564-residue chain is Proline--tRNA ligase (564 aa).

This sequence belongs to the class-II aminoacyl-tRNA synthetase family. ProS type 1 subfamily. Homodimer.

It is found in the cytoplasm. It carries out the reaction tRNA(Pro) + L-proline + ATP = L-prolyl-tRNA(Pro) + AMP + diphosphate. Functionally, catalyzes the attachment of proline to tRNA(Pro) in a two-step reaction: proline is first activated by ATP to form Pro-AMP and then transferred to the acceptor end of tRNA(Pro). As ProRS can inadvertently accommodate and process non-cognate amino acids such as alanine and cysteine, to avoid such errors it has two additional distinct editing activities against alanine. One activity is designated as 'pretransfer' editing and involves the tRNA(Pro)-independent hydrolysis of activated Ala-AMP. The other activity is designated 'posttransfer' editing and involves deacylation of mischarged Ala-tRNA(Pro). The misacylated Cys-tRNA(Pro) is not edited by ProRS. In Xanthomonas campestris pv. campestris (strain 8004), this protein is Proline--tRNA ligase.